The chain runs to 205 residues: Ras-related protein Rab-1A (205 aa).

Ser2 is modified (N-acetylserine). The GTP site is built by Ser20, Gly21, Gly23, Lys24, Ser25, Cys26, Glu38, and Thr43. Ser25 is a binding site for Mg(2+). The Switch 1 motif lies at 34-48 (DTYTESYISTIGVDF). Thr43 lines the Mg(2+) pocket. Residues Lys49 and Lys61 each participate in a glycyl lysine isopeptide (Lys-Gly) (interchain with G-Cter in ubiquitin) cross-link. Asp66 lines the Mg(2+) pocket. A Switch 2 motif is present at residues 66–83 (DTAGQERFRTITSSYYRG). 6 residues coordinate GTP: Gly69, Asn124, Lys125, Asp127, Ala155, and Lys156. Positions 178-205 (PGATAGGAEKSNVKIQSTPVKQSGGGCC) are disordered. Ser194 is subject to Phosphoserine. Residues Cys204 and Cys205 are each lipidated (S-geranylgeranyl cysteine).

The protein belongs to the small GTPase superfamily. Rab family. May interact with YIPF5. Interacts with C9orf72; the interaction mediates recruitment of RAB1A to the ATG1/ULK1 kinase complex. Interacts with GDI1; this promotes dissociation from membranes. Requires Mg(2+) as cofactor. In terms of processing, phosphorylated by CDK1 kinase during mitosis. Ubiquitinated via 'Lys-11'-linked ubiquitination on Lys-49 and Lys-61; impairing the recruitment of guanosine diphosphate (GDP) dissociation inhibitor 1/GDI1.

It localises to the golgi apparatus. It is found in the endoplasmic reticulum. The protein resides in the early endosome. Its subcellular location is the cytoplasm. The protein localises to the cytosol. It localises to the membrane. It is found in the melanosome. It catalyses the reaction GTP + H2O = GDP + phosphate + H(+). Its activity is regulated as follows. Regulated by guanine nucleotide exchange factors (GEFs) which promote the exchange of bound GDP for free GTP. Regulated by GTPase activating proteins (GAPs) which increase the GTP hydrolysis activity. Inhibited by GDP dissociation inhibitors (GDIs). In terms of biological role, the small GTPases Rab are key regulators of intracellular membrane trafficking, from the formation of transport vesicles to their fusion with membranes. Rabs cycle between an inactive GDP-bound form and an active GTP-bound form that is able to recruit to membranes different sets of downstream effectors directly responsible for vesicle formation, movement, tethering and fusion. RAB1A regulates vesicular protein transport from the endoplasmic reticulum (ER) to the Golgi compartment and on to the cell surface, and plays a role in IL-8 and growth hormone secretion. Required to modulate the compacted morphology of the Golgi. Regulates the level of CASR present at the cell membrane. Plays a role in cell adhesion and cell migration, via its role in protein trafficking. Plays a role in autophagosome assembly and cellular defense reactions against pathogenic bacteria. Plays a role in microtubule-dependent protein transport by early endosomes and in anterograde melanosome transport. This Canis lupus familiaris (Dog) protein is Ras-related protein Rab-1A (RAB1A).